A 262-amino-acid chain; its full sequence is tRNA pseudouridine synthase A (262 aa).

Asp-51 acts as the Nucleophile in catalysis. Tyr-109 is a binding site for substrate.

It belongs to the tRNA pseudouridine synthase TruA family. Homodimer.

The catalysed reaction is uridine(38/39/40) in tRNA = pseudouridine(38/39/40) in tRNA. Functionally, formation of pseudouridine at positions 38, 39 and 40 in the anticodon stem and loop of transfer RNAs. The protein is tRNA pseudouridine synthase A of Actinobacillus pleuropneumoniae serotype 5b (strain L20).